The sequence spans 89 residues: Small ribosomal subunit protein bS20 (89 aa).

Belongs to the bacterial ribosomal protein bS20 family.

Its function is as follows. Binds directly to 16S ribosomal RNA. This Solidesulfovibrio magneticus (strain ATCC 700980 / DSM 13731 / RS-1) (Desulfovibrio magneticus) protein is Small ribosomal subunit protein bS20.